Reading from the N-terminus, the 417-residue chain is Serine hydroxymethyltransferase (417 aa).

Residues leucine 121 and 125–127 (GHL) contribute to the (6S)-5,6,7,8-tetrahydrofolate site. Lysine 229 bears the N6-(pyridoxal phosphate)lysine mark. 355-357 (SPF) is a binding site for (6S)-5,6,7,8-tetrahydrofolate.

This sequence belongs to the SHMT family. Homodimer. The cofactor is pyridoxal 5'-phosphate.

The protein localises to the cytoplasm. It catalyses the reaction (6R)-5,10-methylene-5,6,7,8-tetrahydrofolate + glycine + H2O = (6S)-5,6,7,8-tetrahydrofolate + L-serine. Its pathway is one-carbon metabolism; tetrahydrofolate interconversion. It functions in the pathway amino-acid biosynthesis; glycine biosynthesis; glycine from L-serine: step 1/1. Its function is as follows. Catalyzes the reversible interconversion of serine and glycine with tetrahydrofolate (THF) serving as the one-carbon carrier. This reaction serves as the major source of one-carbon groups required for the biosynthesis of purines, thymidylate, methionine, and other important biomolecules. Also exhibits THF-independent aldolase activity toward beta-hydroxyamino acids, producing glycine and aldehydes, via a retro-aldol mechanism. The polypeptide is Serine hydroxymethyltransferase (Stenotrophomonas maltophilia (strain R551-3)).